Here is a 1370-residue protein sequence, read N- to C-terminus: Reverse gyrase 1 (1370 aa).

An RG N-terminal-type zinc finger spans residues 6–47 (AASRGVYRYLCPNCGGPNSEERLSRGLPCPRCLPRLPRKGVS). The Zn(2+) site is built by Cys-16, Cys-19, Cys-34, and Cys-37. ATP contacts are provided by residues Gln-95 and 112–119 (APTGVGKT). The Helicase ATP-binding domain occupies 99–287 (AKRLARGDSF…RKKLLEVKRR (189 aa)). Residues 220–223 (DDVD) carry the DEAD box motif. A topoisomerase I region spans residues 643–1370 (ELVRTALLVV…VSRVWGAGVG (728 aa)). Positions 647 to 825 (TALLVVESPN…DIKRLEFHEV (179 aa)) constitute a Toprim domain. A Mg(2+)-binding site is contributed by Glu-653. The RG C-terminal-type zinc-finger motif lies at 744-772 (IKRCLDCGYQFVDEASRCPRCGSELIRNS). Residues Cys-747, Cys-750, Cys-761, and Cys-764 each coordinate Zn(2+). A Mg(2+)-binding site is contributed by Asp-794. Residues 841–1323 (DDNLVDAQVV…SVFNEISDLA (483 aa)) form the Topo IA-type catalytic domain. The active-site O-(5'-phospho-DNA)-tyrosine intermediate is Tyr-1028.

It in the N-terminal section; belongs to the DEAD box helicase family. DDVD subfamily. The protein in the C-terminal section; belongs to the type IA topoisomerase family. Monomer. It depends on Zn(2+) as a cofactor. The cofactor is Mg(2+).

The protein localises to the cytoplasm. It carries out the reaction ATP + H2O = ADP + phosphate + H(+). Functionally, modifies the topological state of DNA by introducing positive supercoils in an ATP-dependent process, increasing the linking number in steps of +1. Binds to single-stranded DNA, transiently cleaves and then rejoins the ends, introducing a positive supercoil in the process. The scissile phosphodiester is attacked by the catalytic tyrosine of the enzyme, resulting in the formation of a DNA-(5'-phosphotyrosyl)-enzyme intermediate. Probably involved in rewinding DNA strands in regions of the chromosome that have opened up to allow replication, transcription, DNA repair and/or for DNA protection. The chain is Reverse gyrase 1 from Aeropyrum pernix (strain ATCC 700893 / DSM 11879 / JCM 9820 / NBRC 100138 / K1).